The following is a 239-amino-acid chain: Small ribosomal subunit protein uS2 (239 aa).

Belongs to the universal ribosomal protein uS2 family.

The sequence is that of Small ribosomal subunit protein uS2 from Synechococcus sp. (strain WH7803).